The sequence spans 235 residues: NADH-quinone oxidoreductase subunit B 2 (235 aa).

The segment covering 1-14 (MGLTSRPTPASRQP) has biased composition (low complexity). The interval 1 to 24 (MGLTSRPTPASRQPASPPPADPVL) is disordered. The [4Fe-4S] cluster site is built by Cys-63, Cys-64, Cys-129, and Cys-159. The tract at residues 188–235 (TGATGGGPSTDALRSGLVAAPTAPGPTAPASTAPGPTAPAPTQDEERR) is disordered.

Belongs to the complex I 20 kDa subunit family. As to quaternary structure, NDH-1 is composed of 14 different subunits. Subunits NuoB, C, D, E, F, and G constitute the peripheral sector of the complex. [4Fe-4S] cluster is required as a cofactor.

Its subcellular location is the cell membrane. The enzyme catalyses a quinone + NADH + 5 H(+)(in) = a quinol + NAD(+) + 4 H(+)(out). Functionally, NDH-1 shuttles electrons from NADH, via FMN and iron-sulfur (Fe-S) centers, to quinones in the respiratory chain. The immediate electron acceptor for the enzyme in this species is believed to be a menaquinone. Couples the redox reaction to proton translocation (for every two electrons transferred, four hydrogen ions are translocated across the cytoplasmic membrane), and thus conserves the redox energy in a proton gradient. The chain is NADH-quinone oxidoreductase subunit B 2 from Streptomyces griseus subsp. griseus (strain JCM 4626 / CBS 651.72 / NBRC 13350 / KCC S-0626 / ISP 5235).